A 273-amino-acid polypeptide reads, in one-letter code: Large ribosomal subunit protein uL2 (273 aa).

Residues 228–273 form a disordered region; sequence VDHPHGGGEGKTSGGRHPVTPWGFPTKGKKTRKNKRTSKFIVKKRK. Positions 254–273 are enriched in basic residues; the sequence is KGKKTRKNKRTSKFIVKKRK.

This sequence belongs to the universal ribosomal protein uL2 family. In terms of assembly, part of the 50S ribosomal subunit. Forms a bridge to the 30S subunit in the 70S ribosome.

Its function is as follows. One of the primary rRNA binding proteins. Required for association of the 30S and 50S subunits to form the 70S ribosome, for tRNA binding and peptide bond formation. It has been suggested to have peptidyltransferase activity; this is somewhat controversial. Makes several contacts with the 16S rRNA in the 70S ribosome. This is Large ribosomal subunit protein uL2 from Rickettsia canadensis (strain McKiel).